We begin with the raw amino-acid sequence, 949 residues long: Glycine dehydrogenase (decarboxylating) (949 aa).

Lys-700 bears the N6-(pyridoxal phosphate)lysine mark.

The protein belongs to the GcvP family. In terms of assembly, the glycine cleavage system is composed of four proteins: P, T, L and H. Pyridoxal 5'-phosphate is required as a cofactor.

The enzyme catalyses N(6)-[(R)-lipoyl]-L-lysyl-[glycine-cleavage complex H protein] + glycine + H(+) = N(6)-[(R)-S(8)-aminomethyldihydrolipoyl]-L-lysyl-[glycine-cleavage complex H protein] + CO2. The glycine cleavage system catalyzes the degradation of glycine. The P protein binds the alpha-amino group of glycine through its pyridoxal phosphate cofactor; CO(2) is released and the remaining methylamine moiety is then transferred to the lipoamide cofactor of the H protein. The polypeptide is Glycine dehydrogenase (decarboxylating) (Flavobacterium johnsoniae (strain ATCC 17061 / DSM 2064 / JCM 8514 / BCRC 14874 / CCUG 350202 / NBRC 14942 / NCIMB 11054 / UW101) (Cytophaga johnsonae)).